We begin with the raw amino-acid sequence, 294 residues long: UDP-3-O-acyl-N-acetylglucosamine deacetylase (294 aa).

Residues histidine 75, histidine 232, and aspartate 236 each contribute to the Zn(2+) site. The active-site Proton donor is the histidine 259.

This sequence belongs to the LpxC family. Zn(2+) is required as a cofactor.

The enzyme catalyses a UDP-3-O-[(3R)-3-hydroxyacyl]-N-acetyl-alpha-D-glucosamine + H2O = a UDP-3-O-[(3R)-3-hydroxyacyl]-alpha-D-glucosamine + acetate. It participates in glycolipid biosynthesis; lipid IV(A) biosynthesis; lipid IV(A) from (3R)-3-hydroxytetradecanoyl-[acyl-carrier-protein] and UDP-N-acetyl-alpha-D-glucosamine: step 2/6. Its function is as follows. Catalyzes the hydrolysis of UDP-3-O-myristoyl-N-acetylglucosamine to form UDP-3-O-myristoylglucosamine and acetate, the committed step in lipid A biosynthesis. This is UDP-3-O-acyl-N-acetylglucosamine deacetylase from Campylobacter fetus subsp. fetus (strain 82-40).